A 1922-amino-acid polypeptide reads, in one-letter code: Endoribonuclease Dicer (1922 aa).

The 177-residue stretch at 51 to 227 folds into the Helicase ATP-binding domain; that stretch reads LLEAALDHNT…ELEEKIQKLE (177 aa). Residue 64-71 participates in ATP binding; that stretch reads LNTGSGKT. Residues 175–178 carry the DECH box motif; that stretch reads DECH. Positions 256–595 are required for interaction with PRKRA and TARBP2; it reads DCGPFTDRSG…LRNKCSKSVD (340 aa). The segment at 409–433 is disordered; sequence YVSWSDSEDDDEDEEIEEKEKPETN. Residues Ser-413 and Ser-415 each carry the phosphoserine modification. Positions 414-425 are enriched in acidic residues; sequence DSEDDDEDEEIE. The Helicase C-terminal domain maps to 433–602; sequence NFPSPFTNIL…SVDTGETDID (170 aa). The region spanning 630–722 is the Dicer dsRNA-binding fold domain; that stretch reads AIGHINRYCA…MPVGKETVKY (93 aa). In terms of domain architecture, PAZ spans 895-1042; that stretch reads KFMEDIEKSE…LVPELCAIHP (148 aa). Residues Ser-1016 and Ser-1160 each carry the phosphoserine modification. An RNase III 1 domain is found at 1276-1403; the sequence is DSEQSPSIGY…TDKWEKDEMT (128 aa). The Mg(2+) site is built by Glu-1316, Asp-1395, and Glu-1398. A phosphoserine mark is found at Ser-1460, Ser-1468, and Ser-1470. The 159-residue stretch at 1666 to 1824 folds into the RNase III 2 domain; sequence FENFEKKINY…LAGAIYMDSG (159 aa). Mg(2+) contacts are provided by Glu-1705, Asp-1810, and Glu-1813. In terms of domain architecture, DRBM spans 1849–1914; that stretch reads VPRSPVRELL…ARRALRSLKA (66 aa). The residue at position 1868 (Ser-1868) is a Phosphoserine.

Belongs to the helicase family. Dicer subfamily. Component of the RISC loading complex (RLC), or micro-RNA (miRNA) loading complex (miRLC), which is composed of DICER1, AGO2 and TARBP2; DICER1 and TARBP2 are required to process precursor miRNAs (pre-miRNAs) to mature miRNAs and then load them onto AGO2. Note that the trimeric RLC/miRLC is also referred to as RISC. Interacts with DHX9, AGO1, PIWIL1 and PRKRA. Associates with the 60S ribosome. Interacts with BCDIN3D. Interacts with AGO2, TARBP2, EIF6, MOV10 and RPL7A (60S ribosome subunit); they form a large RNA-induced silencing complex (RISC). Interacts (via Dicer dsRNA-binding fold domain) with ALOX5 (via PLAT domain); this interaction enhances arachidonate 5-lipoxygenase activity and modifies the miRNA precursor processing activity of DICER1. In terms of assembly, (Microbial infection) Interacts with ebolavirus transcriptional activator VP30; this interaction prevents TARBP2/TRBP binding to DICER1 and thus allows the virus to counteract host RNA silencing. As to quaternary structure, (Microbial infection) Interacts with ebolavirus transcriptional activator VP35; this interaction prevents TARBP2/TRBP binding to DICER1 and thus allows the virus to counteract host RNA silencing. It depends on Mg(2+) as a cofactor. Requires Mn(2+) as cofactor.

It localises to the cytoplasm. The protein localises to the perinuclear region. The catalysed reaction is Endonucleolytic cleavage to 5'-phosphomonoester.. In terms of biological role, double-stranded RNA (dsRNA) endoribonuclease playing a central role in short dsRNA-mediated post-transcriptional gene silencing. Cleaves naturally occurring long dsRNAs and short hairpin pre-microRNAs (miRNA) into fragments of twenty-one to twenty-three nucleotides with 3' overhang of two nucleotides, producing respectively short interfering RNAs (siRNA) and mature microRNAs. SiRNAs and miRNAs serve as guide to direct the RNA-induced silencing complex (RISC) to complementary RNAs to degrade them or prevent their translation. Gene silencing mediated by siRNAs, also called RNA interference, controls the elimination of transcripts from mobile and repetitive DNA elements of the genome but also the degradation of exogenous RNA of viral origin for instance. The miRNA pathway on the other side is a mean to specifically regulate the expression of target genes. The chain is Endoribonuclease Dicer (DICER1) from Homo sapiens (Human).